The sequence spans 156 residues: ATP synthase subunit b (156 aa).

A helical membrane pass occupies residues 7–29; it reads LIGQSVAFLIFVWFCMKFVWPPL.

It belongs to the ATPase B chain family. In terms of assembly, F-type ATPases have 2 components, F(1) - the catalytic core - and F(0) - the membrane proton channel. F(1) has five subunits: alpha(3), beta(3), gamma(1), delta(1), epsilon(1). F(0) has three main subunits: a(1), b(2) and c(10-14). The alpha and beta chains form an alternating ring which encloses part of the gamma chain. F(1) is attached to F(0) by a central stalk formed by the gamma and epsilon chains, while a peripheral stalk is formed by the delta and b chains.

The protein localises to the cell inner membrane. Functionally, f(1)F(0) ATP synthase produces ATP from ADP in the presence of a proton or sodium gradient. F-type ATPases consist of two structural domains, F(1) containing the extramembraneous catalytic core and F(0) containing the membrane proton channel, linked together by a central stalk and a peripheral stalk. During catalysis, ATP synthesis in the catalytic domain of F(1) is coupled via a rotary mechanism of the central stalk subunits to proton translocation. In terms of biological role, component of the F(0) channel, it forms part of the peripheral stalk, linking F(1) to F(0). The chain is ATP synthase subunit b from Shewanella denitrificans (strain OS217 / ATCC BAA-1090 / DSM 15013).